The chain runs to 666 residues: Probable potassium transport system protein Kup (666 aa).

Helical transmembrane passes span 16–36 (GFIIALGIVYGDIGTSPLYTM), 58–78 (ISLIIWTLTLITTIKYVLVAL), 99–119 (TPWLIVPAVIGGATLLSDGAL), 141–161 (IFQNQSNVIFATLFILLLLFA), 167–187 (TGVIGKLFGPIMFIWFAFLGI), 221–241 (IFILGSIFLATTGAEALYSDL), 253–273 (WPFVKVAIILSYCGQGAWILA), 292–312 (FTMHVVILATLAAIIASQALI), 343–363 (TYIPVINWFLFAITTSIVLLF), 373–393 (YGLAITITMLMTTILLSFFLI), 402–422 (VLLMMIFFGILEGIFFLASAV), and 424–444 (FMHGGYVVVIIAVAIIFIMII).

This sequence belongs to the HAK/KUP transporter (TC 2.A.72) family.

It localises to the cell membrane. The enzyme catalyses K(+)(in) + H(+)(in) = K(+)(out) + H(+)(out). In terms of biological role, transport of potassium into the cell. Likely operates as a K(+):H(+) symporter. In Streptococcus agalactiae serotype III (strain NEM316), this protein is Probable potassium transport system protein Kup.